The chain runs to 486 residues: UDP-N-acetylmuramoyl-L-alanyl-D-glutamate--2,6-diaminopimelate ligase (486 aa).

A UDP-N-acetyl-alpha-D-muramoyl-L-alanyl-D-glutamate-binding site is contributed by Ser-30. 112 to 118 (GTNGKTT) is an ATP binding site. UDP-N-acetyl-alpha-D-muramoyl-L-alanyl-D-glutamate contacts are provided by residues 154–155 (TT), Ser-181, Gln-187, and Arg-189. Lys-221 bears the N6-carboxylysine mark. Meso-2,6-diaminopimelate is bound by residues Arg-378, 402-405 (DNPR), Gly-455, and Glu-459. The Meso-diaminopimelate recognition motif motif lies at 402 to 405 (DNPR).

This sequence belongs to the MurCDEF family. MurE subfamily. It depends on Mg(2+) as a cofactor. Post-translationally, carboxylation is probably crucial for Mg(2+) binding and, consequently, for the gamma-phosphate positioning of ATP.

It localises to the cytoplasm. It carries out the reaction UDP-N-acetyl-alpha-D-muramoyl-L-alanyl-D-glutamate + meso-2,6-diaminopimelate + ATP = UDP-N-acetyl-alpha-D-muramoyl-L-alanyl-gamma-D-glutamyl-meso-2,6-diaminopimelate + ADP + phosphate + H(+). It participates in cell wall biogenesis; peptidoglycan biosynthesis. Its function is as follows. Catalyzes the addition of meso-diaminopimelic acid to the nucleotide precursor UDP-N-acetylmuramoyl-L-alanyl-D-glutamate (UMAG) in the biosynthesis of bacterial cell-wall peptidoglycan. This is UDP-N-acetylmuramoyl-L-alanyl-D-glutamate--2,6-diaminopimelate ligase from Cytophaga hutchinsonii (strain ATCC 33406 / DSM 1761 / CIP 103989 / NBRC 15051 / NCIMB 9469 / D465).